Reading from the N-terminus, the 268-residue chain is Thiazole synthase (268 aa).

The Schiff-base intermediate with DXP role is filled by K111. 1-deoxy-D-xylulose 5-phosphate-binding positions include G172, 198–199 (AG), and 220–221 (NT).

This sequence belongs to the ThiG family. In terms of assembly, homotetramer. Forms heterodimers with either ThiH or ThiS.

It is found in the cytoplasm. It catalyses the reaction [ThiS sulfur-carrier protein]-C-terminal-Gly-aminoethanethioate + 2-iminoacetate + 1-deoxy-D-xylulose 5-phosphate = [ThiS sulfur-carrier protein]-C-terminal Gly-Gly + 2-[(2R,5Z)-2-carboxy-4-methylthiazol-5(2H)-ylidene]ethyl phosphate + 2 H2O + H(+). The protein operates within cofactor biosynthesis; thiamine diphosphate biosynthesis. Catalyzes the rearrangement of 1-deoxy-D-xylulose 5-phosphate (DXP) to produce the thiazole phosphate moiety of thiamine. Sulfur is provided by the thiocarboxylate moiety of the carrier protein ThiS. In vitro, sulfur can be provided by H(2)S. The polypeptide is Thiazole synthase (Caulobacter sp. (strain K31)).